Here is an 88-residue protein sequence, read N- to C-terminus: Small ribosomal subunit protein uS17 (88 aa).

Belongs to the universal ribosomal protein uS17 family. In terms of assembly, part of the 30S ribosomal subunit.

Functionally, one of the primary rRNA binding proteins, it binds specifically to the 5'-end of 16S ribosomal RNA. The chain is Small ribosomal subunit protein uS17 from Brevibacillus brevis (strain 47 / JCM 6285 / NBRC 100599).